A 488-amino-acid chain; its full sequence is ATP synthase subunit beta (488 aa).

164–171 is a binding site for ATP; the sequence is GGAGVGKT.

This sequence belongs to the ATPase alpha/beta chains family. As to quaternary structure, F-type ATPases have 2 components, CF(1) - the catalytic core - and CF(0) - the membrane proton channel. CF(1) has five subunits: alpha(3), beta(3), gamma(1), delta(1), epsilon(1). CF(0) has four main subunits: a(1), b(1), b'(1) and c(9-12).

Its subcellular location is the cellular thylakoid membrane. It carries out the reaction ATP + H2O + 4 H(+)(in) = ADP + phosphate + 5 H(+)(out). Its function is as follows. Produces ATP from ADP in the presence of a proton gradient across the membrane. The catalytic sites are hosted primarily by the beta subunits. The polypeptide is ATP synthase subunit beta (Prochlorococcus marinus (strain NATL1A)).